The sequence spans 309 residues: Ribonuclease Z (309 aa).

His-64, His-66, Asp-68, His-69, His-141, Asp-209, and His-267 together coordinate Zn(2+). Residue Asp-68 is the Proton acceptor of the active site.

It belongs to the RNase Z family. Homodimer. Zn(2+) serves as cofactor.

It catalyses the reaction Endonucleolytic cleavage of RNA, removing extra 3' nucleotides from tRNA precursor, generating 3' termini of tRNAs. A 3'-hydroxy group is left at the tRNA terminus and a 5'-phosphoryl group is left at the trailer molecule.. Its function is as follows. Zinc phosphodiesterase, which displays some tRNA 3'-processing endonuclease activity. Probably involved in tRNA maturation, by removing a 3'-trailer from precursor tRNA. This chain is Ribonuclease Z, found in Picrophilus torridus (strain ATCC 700027 / DSM 9790 / JCM 10055 / NBRC 100828 / KAW 2/3).